A 364-amino-acid polypeptide reads, in one-letter code: DNA polymerase IV (364 aa).

The region spanning Ile-14–Gly-198 is the UmuC domain. Mg(2+) is bound by residues Asp-18 and Asp-116. The active site involves Glu-117.

This sequence belongs to the DNA polymerase type-Y family. Monomer. Mg(2+) is required as a cofactor.

Its subcellular location is the cytoplasm. The catalysed reaction is DNA(n) + a 2'-deoxyribonucleoside 5'-triphosphate = DNA(n+1) + diphosphate. Its function is as follows. Poorly processive, error-prone DNA polymerase involved in untargeted mutagenesis. Copies undamaged DNA at stalled replication forks, which arise in vivo from mismatched or misaligned primer ends. These misaligned primers can be extended by PolIV. Exhibits no 3'-5' exonuclease (proofreading) activity. May be involved in translesional synthesis, in conjunction with the beta clamp from PolIII. The protein is DNA polymerase IV of Streptococcus pyogenes serotype M2 (strain MGAS10270).